The primary structure comprises 462 residues: Nuclear factor interleukin-3-regulated protein (462 aa).

Residues 1 to 22 are disordered; it reads MQLRKMQTIKKEPAPLDPTSSS. A Glycyl lysine isopeptide (Lys-Gly) (interchain with G-Cter in SUMO2) cross-link involves residue Lys24. A bZIP domain is found at 73 to 136; sequence DAMYWEKRRK…GLISSTAYAQ (64 aa). The interval 79 to 95 is basic motif; that stretch reads KRRKNNEAAKRSREKRR. The leucine-zipper stretch occupies residues 99–106; it reads LVLENKLI. The tract at residues 188–214 is disordered; it reads SDVSEVSSVEHTQESPAQGGCRSPENK. A Glycyl lysine isopeptide (Lys-Gly) (interchain with G-Cter in SUMO2) cross-link involves residue Lys214. A Glycyl lysine isopeptide (Lys-Gly) (interchain with G-Cter in SUMO1); alternate cross-link involves residue Lys219. Residue Lys219 forms a Glycyl lysine isopeptide (Lys-Gly) (interchain with G-Cter in SUMO2); alternate linkage. The disordered stretch occupies residues 259-298; that stretch reads PPLLQVHGSTSNSPRTSEADEGVVGKSSDGEDEQQVPKGP. Positions 265–274 are enriched in polar residues; sequence HGSTSNSPRT. A necessary for transcriptional repression and sufficient for interaction with PER2 region spans residues 281–420; it reads VVGKSSDGED…FKTGVVEVKD (140 aa). Phosphoserine is present on Ser301. Glycyl lysine isopeptide (Lys-Gly) (interchain with G-Cter in SUMO2) cross-links involve residues Lys314, Lys326, Lys332, Lys337, and Lys350. Ser353 is modified (phosphoserine). Glycyl lysine isopeptide (Lys-Gly) (interchain with G-Cter in SUMO2) cross-links involve residues Lys360, Lys394, Lys401, Lys406, Lys412, Lys419, Lys424, Lys434, and Lys448.

This sequence belongs to the bZIP family. NFIL3 subfamily. As to quaternary structure, homodimer. Binds DNA as a dimer. Interacts with DR1. Interacts with PER2 and CRY2. Interacts with NR0B2. Interacts with NR1D1. Interacts with MYSM1. Expressed in suprachiasmatic nucleus and liver (at protein level). Expressed in suprachiasmatic nucleus, hippocampus, gyrus dentatus, piriform cortex, internal granular layer of olfactory bulb, dorsomedial hypothalamic nucleus, pontine nuclei, granular layer of cerebellum, liver and calvariae osteoblasts. Expressed in natural killer cell precursors in bone marrow.

The protein resides in the nucleus. Functionally, acts as a transcriptional regulator that recognizes and binds to the sequence 5'-[GA]TTA[CT]GTAA[CT]-3', a sequence present in many cellular and viral promoters. Represses transcription from promoters with activating transcription factor (ATF) sites. Represses promoter activity in osteoblasts. Represses transcriptional activity of PER1. Represses transcriptional activity of PER2 via the B-site on the promoter. Activates transcription from the interleukin-3 promoter in T-cells. Competes for the same consensus-binding site with PAR DNA-binding factors (DBP, HLF and TEF). Component of the circadian clock that acts as a negative regulator for the circadian expression of PER2 oscillation in the cell-autonomous core clock. Protects pro-B cells from programmed cell death. Represses the transcription of CYP2A5. Positively regulates the expression and activity of CES2 by antagonizing the repressive action of NR1D1 on CES2. Required for the development of natural killer cell precursors. This Mus musculus (Mouse) protein is Nuclear factor interleukin-3-regulated protein (Nfil3).